Reading from the N-terminus, the 806-residue chain is ATP-dependent zinc metalloprotease FTSH 11, chloroplastic/mitochondrial (806 aa).

A chloroplast and mitochondrion-targeting transit peptide spans Met-1–Arg-63. Residues Phe-106–Gly-116 are compositionally biased toward basic and acidic residues. Residues Phe-106 to Glu-130 form a disordered region. The helical transmembrane segment at Leu-301–Ala-321 threads the bilayer. Gly-402–Thr-409 contacts ATP. His-620 is a binding site for Zn(2+). The active site involves Glu-621. The Zn(2+) site is built by His-624 and Asp-698.

It in the N-terminal section; belongs to the AAA ATPase family. The protein in the C-terminal section; belongs to the peptidase M41 family. As to quaternary structure, homooligomer. It depends on Zn(2+) as a cofactor.

It is found in the mitochondrion inner membrane. Its subcellular location is the plastid. The protein localises to the chloroplast thylakoid membrane. In terms of biological role, probable ATP-dependent zinc metallopeptidase. Involved in the assembly and/or stability of the complexes I and V. Involved in thermotolerance but not in high light stress resistance or in the assembly/stability of the complexes I and V of the mitochondrial oxidative phosphorylation system. The polypeptide is ATP-dependent zinc metalloprotease FTSH 11, chloroplastic/mitochondrial (FTSH11) (Arabidopsis thaliana (Mouse-ear cress)).